Here is a 484-residue protein sequence, read N- to C-terminus: ATP synthase subunit beta (484 aa).

Residue 162-169 participates in ATP binding; it reads GGAGVGKT.

It belongs to the ATPase alpha/beta chains family. In terms of assembly, F-type ATPases have 2 components, CF(1) - the catalytic core - and CF(0) - the membrane proton channel. CF(1) has five subunits: alpha(3), beta(3), gamma(1), delta(1), epsilon(1). CF(0) has three main subunits: a(1), b(2) and c(9-12). The alpha and beta chains form an alternating ring which encloses part of the gamma chain. CF(1) is attached to CF(0) by a central stalk formed by the gamma and epsilon chains, while a peripheral stalk is formed by the delta and b chains.

Its subcellular location is the cell inner membrane. The enzyme catalyses ATP + H2O + 4 H(+)(in) = ADP + phosphate + 5 H(+)(out). Functionally, produces ATP from ADP in the presence of a proton gradient across the membrane. The catalytic sites are hosted primarily by the beta subunits. In Agrobacterium fabrum (strain C58 / ATCC 33970) (Agrobacterium tumefaciens (strain C58)), this protein is ATP synthase subunit beta.